A 298-amino-acid polypeptide reads, in one-letter code: Mimecan (298 aa).

A signal peptide spans 1-20; the sequence is MKTLQSTLLLLLLVPLIKPA. The O-linked (GalNAc...) threonine glycan is linked to Thr80. Residue Asn88 is glycosylated (N-linked (GlcNAc...) (keratan sulfate) asparagine). 7 LRR repeats span residues 112–131, 132–155, 156–179, 180–199, 200–225, 226–246, and 247–277; these read DAVP…FNKI, KKLT…GNLI, EDIE…ENQL, LKLP…YNKI, KSRG…HNAL, ESVP…FNNI, and ASIT…GNPI. A glycan (N-linked (GlcNAc...) (keratan sulfate) asparagine) is linked at Asn214. Cys255 and Cys288 are joined by a disulfide. Asn258 is a glycosylation site (N-linked (GlcNAc...) (keratan sulfate) asparagine).

It belongs to the small leucine-rich proteoglycan (SLRP) family. SLRP class III subfamily. O-glycosylated with a core 1 or possibly core 8 glycan. Post-translationally, contains keratan sulfate. Bone.

The protein localises to the secreted. It localises to the extracellular space. Its subcellular location is the extracellular matrix. Its function is as follows. Induces bone formation in conjunction with TGF-beta-1 or TGF-beta-2. This chain is Mimecan (OGN), found in Homo sapiens (Human).